The chain runs to 146 residues: uncharacterized protein (146 aa).

Residues 7-27 traverse the membrane as a helical segment; that stretch reads FVLSITIVLVILIIIAFIWYN.

The protein belongs to the asfivirus E146L family.

It localises to the host membrane. Its subcellular location is the virion. This is an uncharacterized protein from African swine fever virus (strain Badajoz 1971 Vero-adapted) (Ba71V).